The following is a 108-amino-acid chain: Virulence-associated protein I (108 aa).

Residues 19–74 form the HTH cro/C1-type domain; the sequence is LREEYLKPMGLSAHALAKALHVSPSRINEIVREQRGITADTALRLVRYFGGDAQSW. The H-T-H motif DNA-binding region spans 30-49; that stretch reads SAHALAKALHVSPSRINEIV.

It belongs to the VapA/VapI family.

This is Virulence-associated protein I (vapI) from Dichelobacter nodosus (Bacteroides nodosus).